The chain runs to 427 residues: Acetyl-CoA acetyltransferase, mitochondrial (427 aa).

Residues 1–33 constitute a mitochondrion transit peptide; it reads MAVLAALLRGGARSRSPLLRRLVQEIRYVERSY. K66 carries the post-translational modification N6-acetyllysine; alternate. K66 is subject to N6-succinyllysine; alternate. K78 is subject to N6-succinyllysine. Catalysis depends on C126, which acts as the Acyl-thioester intermediate. K174, K181, K190, and K202 each carry N6-acetyllysine; alternate. Residues K174, K181, K190, and K202 each carry the N6-succinyllysine; alternate modification. Y219 provides a ligand contact to CoA. Residue Y219 coordinates K(+). N6-acetyllysine; alternate occurs at positions 223 and 230. 2 positions are modified to N6-succinyllysine; alternate: K223 and K230. K243 carries the post-translational modification N6-succinyllysine. 2 positions are modified to N6-acetyllysine: K251 and K257. CoA contacts are provided by residues 258-260 and K263; that span reads RVD. Position 263 is an N6-acetyllysine; alternate (K263). K263 carries the post-translational modification N6-succinyllysine; alternate. K266 and K268 each carry N6-succinyllysine. K273 is modified (N6-acetyllysine). 3 residues coordinate K(+): A280, A281, and A283. S284 is a CoA binding site. The residue at position 338 (K338) is an N6-acetyllysine. V381 contacts K(+). The Proton donor/acceptor role is filled by C413.

This sequence belongs to the thiolase-like superfamily. Thiolase family. Homotetramer. Post-translationally, succinylation at Lys-268, adjacent to a coenzyme A binding site. Desuccinylated by SIRT5.

The protein localises to the mitochondrion. The enzyme catalyses 2 acetyl-CoA = acetoacetyl-CoA + CoA. It carries out the reaction propanoyl-CoA + acetyl-CoA = 2-methyl-3-oxobutanoyl-CoA + CoA. Its pathway is lipid metabolism; fatty acid beta-oxidation. Its activity is regulated as follows. Activated by potassium ions, but not sodium ions. This is one of the enzymes that catalyzes the last step of the mitochondrial beta-oxidation pathway, an aerobic process breaking down fatty acids into acetyl-CoA. Using free coenzyme A/CoA, catalyzes the thiolytic cleavage of medium- to long-chain 3-oxoacyl-CoAs into acetyl-CoA and a fatty acyl-CoA shortened by two carbon atoms. The activity of the enzyme is reversible and it can also catalyze the condensation of two acetyl-CoA molecules into acetoacetyl-CoA. Thereby, it plays a major role in ketone body metabolism. The chain is Acetyl-CoA acetyltransferase, mitochondrial (ACAT1) from Macaca fascicularis (Crab-eating macaque).